We begin with the raw amino-acid sequence, 299 residues long: Transcription factor MYB17 (299 aa).

HTH myb-type domains are found at residues 9–61 (KIGL…TNYL) and 62–116 (RPDI…KKRL). 2 consecutive DNA-binding regions (H-T-H motif) follow at residues 37–61 (WRTL…TNYL) and 89–112 (WAAI…NTHL).

As to quaternary structure, interacts with LFY. As to expression, expressed in the shoot apex, young flower buds, developing carpels and siliques. Expressed in floral meristem, initiating floral primordia and developing flowers.

The protein localises to the nucleus. Transcription factor that may play a role in flower development by repressing ANT. Regulates the transition of meristem identity from vegetative growth to flowering. Acts downstream of LFY and upstream of AP1. Directly activates AP1 to promote floral fate. Together with LFY and AP1 may constitute a regulatory network that contributes to an abrupt and robust meristem identity transition. The protein is Transcription factor MYB17 of Arabidopsis thaliana (Mouse-ear cress).